The following is a 250-amino-acid chain: Probable transcriptional regulatory protein Cvib_1432 (250 aa).

The protein belongs to the TACO1 family.

The protein localises to the cytoplasm. The sequence is that of Probable transcriptional regulatory protein Cvib_1432 from Chlorobium phaeovibrioides (strain DSM 265 / 1930) (Prosthecochloris vibrioformis (strain DSM 265)).